A 320-amino-acid polypeptide reads, in one-letter code: 1-aminocyclopropane-1-carboxylate oxidase 2 (320 aa).

Positions 111–143 form a coiled coil; it reads DEYRTAMKDFGKRLENLAEDLLDLLCENLGLEK. Positions 156–256 constitute a Fe2OG dioxygenase domain; that stretch reads PTFGTKVSNY…RMSVASFYNP (101 aa). Fe cation is bound by residues His180, Asp182, and His237. Arg247 contributes to the 2-oxoglutarate binding site.

This sequence belongs to the iron/ascorbate-dependent oxidoreductase family. Fe(2+) serves as cofactor. The cofactor is Cu(2+). Expressed in vegetative tissues. Constitutively expressed in leaves and blades. In ethylene exposed etiolated seedlings, localized in cells at the outer side of the exaggerated hook in an ethylene-dependent manner and following an ethylene sensitive pattern. Also detected in the root tip when treated by ethylene.

The catalysed reaction is 1-aminocyclopropane-1-carboxylate + L-ascorbate + O2 = ethene + L-dehydroascorbate + hydrogen cyanide + CO2 + 2 H2O. It functions in the pathway alkene biosynthesis; ethylene biosynthesis via S-adenosyl-L-methionine; ethylene from S-adenosyl-L-methionine: step 2/2. Enzyme involved in the ethylene biosynthesis. Required to mediate the 1-aminocyclopropane-1-carboxylic acid (ACC)-mediated reversion of the ABA-induced inhibition of seed germination via endosperm rupture. May promote stem elongation by maximizing the extensibility cells, possibly by activating ethylene biosynthesis, in response to very-long-chain fatty acids (VLCFAs C20:0 to C30:0). The sequence is that of 1-aminocyclopropane-1-carboxylate oxidase 2 (ACO2) from Arabidopsis thaliana (Mouse-ear cress).